Reading from the N-terminus, the 440-residue chain is Ribosomal protein uS12 methylthiotransferase RimO (440 aa).

The region spanning 1-117 (MKIFFISLGC…ITEVIDKVLG (117 aa)) is the MTTase N-terminal domain. The [4Fe-4S] cluster site is built by Cys-10, Cys-46, Cys-80, Cys-154, Cys-158, and Cys-161. The Radical SAM core domain occupies 140–370 (TTGGYYSFLK…MEIQQGIAFE (231 aa)). The region spanning 373–440 (ESMVGRKLKV…KEYDLIGTAE (68 aa)) is the TRAM domain.

The protein belongs to the methylthiotransferase family. RimO subfamily. It depends on [4Fe-4S] cluster as a cofactor.

It localises to the cytoplasm. It catalyses the reaction L-aspartate(89)-[ribosomal protein uS12]-hydrogen + (sulfur carrier)-SH + AH2 + 2 S-adenosyl-L-methionine = 3-methylsulfanyl-L-aspartate(89)-[ribosomal protein uS12]-hydrogen + (sulfur carrier)-H + 5'-deoxyadenosine + L-methionine + A + S-adenosyl-L-homocysteine + 2 H(+). Catalyzes the methylthiolation of an aspartic acid residue of ribosomal protein uS12. The polypeptide is Ribosomal protein uS12 methylthiotransferase RimO (Lachnoclostridium phytofermentans (strain ATCC 700394 / DSM 18823 / ISDg) (Clostridium phytofermentans)).